Here is a 627-residue protein sequence, read N- to C-terminus: uncharacterized protein (627 aa).

2 disordered regions span residues 441 to 466 (EAVP…QGEN) and 608 to 627 (DLRG…TEDR). A compositionally biased stretch (basic and acidic residues) spans 615–627 (DYERGKGESTEDR).

This is an uncharacterized protein from Homo sapiens (Human).